Consider the following 425-residue polypeptide: MTSASFAFSPRVLDPLDPQVRPDPQGRFGPFGGRFVPETLMSALTELEEAFEHHWRDPDFRAEFHNLLRDFVGRPSPLYFAQRLTEYYGGPQIYLKREDLNHTGAHKINNALGQVLLAVRMGKRRIIAETGAGQHGVATATVCARFGLECVIYMGALDMERQAPNVQRMRLLGAEVRGVESGTRTLKDALSEAIRDWVTNVETTHYVIGTVAGPHPYPKLVRAFHDVIGQETRQQCQEKWGGLPDVLLACVGGGSNALGLFNEFVRDPQVRLIGIEAAGEGLHTPRHAATLNRGRIGVLHGAMSYLLQDEEGQVQEAHSISAGLDYPGVGPEHSYLKEIGRAEYYAVTDDEAVEALLLLSRLEGIIPALETAHALAYLKTLAPQQGLRPANAIGPQQRVVVNCSGRGDKDLNTVFKYLQQRGRSF.

An N6-(pyridoxal phosphate)lysine modification is found at K107.

This sequence belongs to the TrpB family. As to quaternary structure, tetramer of two alpha and two beta chains. The cofactor is pyridoxal 5'-phosphate.

It carries out the reaction (1S,2R)-1-C-(indol-3-yl)glycerol 3-phosphate + L-serine = D-glyceraldehyde 3-phosphate + L-tryptophan + H2O. It participates in amino-acid biosynthesis; L-tryptophan biosynthesis; L-tryptophan from chorismate: step 5/5. Functionally, the beta subunit is responsible for the synthesis of L-tryptophan from indole and L-serine. This Synechococcus sp. (strain JA-2-3B'a(2-13)) (Cyanobacteria bacterium Yellowstone B-Prime) protein is Tryptophan synthase beta chain.